The sequence spans 676 residues: Electrogenic aspartate/glutamate antiporter SLC25A13, mitochondrial (676 aa).

Position 2 is an N-acetylalanine (Ala-2). A regulatory N-terminal domain region spans residues Ala-2–Pro-295. Over Ala-2–Arg-332 the chain is Mitochondrial intermembrane. Lys-18 carries the N6-acetyllysine modification. 4 EF-hand domains span residues Ser-51 to Cys-86, Ala-87 to His-122, Gln-123 to Glu-157, and Ile-158 to His-193. Asp-66, Thr-68, Asp-70, Leu-72, and Glu-77 together coordinate Ca(2+). Residues Leu-296 to Gln-311 form a linker loop domain region. A carrier domain region spans residues Phe-322–Gly-613. 3 Solcar repeats span residues Ala-327–Lys-419, Val-427–Ser-511, and Val-519–Trp-607. A helical transmembrane segment spans residues Phe-333–Ile-350. Residues Asp-351–Arg-393 are Mitochondrial matrix-facing. Lys-354 and Lys-373 each carry N6-acetyllysine. The helical transmembrane segment at Gly-394–Asn-413 threads the bilayer. Residues Asp-414–Gly-436 lie on the Mitochondrial intermembrane side of the membrane. Residues Gly-437–Leu-450 form a helical membrane-spanning segment. The Mitochondrial matrix portion of the chain corresponds to Glu-451–Lys-485. Position 454 is an N6-methyllysine (Lys-454). Lys-485 carries the post-translational modification N6-acetyllysine; alternate. Lys-485 carries the N6-succinyllysine; alternate modification. A helical transmembrane segment spans residues Gly-486 to Tyr-505. The Mitochondrial intermembrane portion of the chain corresponds to Ala-506–Leu-524. Residues Leu-525–Ala-542 form a helical membrane-spanning segment. Residues Asp-543 to Lys-581 are Mitochondrial matrix-facing. The residue at position 581 (Lys-581) is an N6-succinyllysine. A helical transmembrane segment spans residues Gly-582–Tyr-601. The Mitochondrial intermembrane segment spans residues Glu-602 to Ser-676. The C-terminal domain stretch occupies residues Gly-614–Ser-676. Lys-663 bears the N6-acetyllysine mark. Ser-667 bears the Phosphoserine mark.

It belongs to the mitochondrial carrier (TC 2.A.29) family. In terms of assembly, homodimer (via N-terminus). In terms of tissue distribution, at 10.5 dpc, expressed in branchial arches, a well as in the limb and tail buds. At 13.5 dpc expression is predominant in epithelial structures and the forebrain, kidney and liver. Expression in liver is maintained into adulthood.

Its subcellular location is the mitochondrion inner membrane. It carries out the reaction L-aspartate(in) + L-glutamate(out) + H(+)(out) = L-aspartate(out) + L-glutamate(in) + H(+)(in). The enzyme catalyses 3-sulfino-L-alanine(out) + L-glutamate(in) + H(+)(in) = 3-sulfino-L-alanine(in) + L-glutamate(out) + H(+)(out). The catalysed reaction is 3-sulfino-L-alanine(out) + L-aspartate(in) = 3-sulfino-L-alanine(in) + L-aspartate(out). Mitochondrial electrogenic aspartate/glutamate antiporter that favors efflux of aspartate and entry of glutamate and proton within the mitochondria as part of the malate-aspartate shuttle. Also mediates the uptake of L-cysteinesulfinate (3-sulfino-L-alanine) by mitochondria in exchange of L-glutamate and proton. Can also exchange L-cysteinesulfinate with aspartate in their anionic form without any proton translocation. Lacks transport activity towards gamma-aminobutyric acid (GABA). This Mus musculus (Mouse) protein is Electrogenic aspartate/glutamate antiporter SLC25A13, mitochondrial.